We begin with the raw amino-acid sequence, 336 residues long: Nitrilase (336 aa).

One can recognise a CN hydrolase domain in the interval 5-278 (LKVACVQAAP…EGLLYATLDP (274 aa)). Glu45 functions as the Proton acceptor in the catalytic mechanism. The active-site Proton donor is the Lys127. Cys161 (nucleophile) is an active-site residue.

The protein belongs to the carbon-nitrogen hydrolase superfamily. Nitrilase family.

The enzyme catalyses a nitrile + 2 H2O = a carboxylate + NH4(+). It carries out the reaction (indol-3-yl)acetonitrile + 2 H2O = (indol-3-yl)acetate + NH4(+). It catalyses the reaction phenylpropanonitrile + 2 H2O = 3-phenylpropanoate + NH4(+). In terms of biological role, arylacetonitrilase which is capable of hydrolyzing indole-3-acetonitrile (IAN) to the plant hormone indole-3-acetate (IAA), and allows the plant pathogenic bacterium to use IAN as a sole nitrogen source. Is also able to hydrolyze phenylpropionitrile (PPN), allowing the use of this compound as a sole nitrogen source. This enzyme may represent an additional mechanism for IAA biosynthesis or may be used to degrade and assimilate aldoximes and nitriles produced during host plant secondary metabolism. The chain is Nitrilase from Pseudomonas syringae pv. syringae (strain B728a).